Consider the following 296-residue polypeptide: Cytidine deaminase (296 aa).

CMP/dCMP-type deaminase domains are found at residues Thr47 to Lys167 and Asp186 to Val296. Position 88-90 (Asn88–Glu90) interacts with substrate. His101 lines the Zn(2+) pocket. The active-site Proton donor is Glu103. Residues Cys128 and Cys131 each coordinate Zn(2+).

Belongs to the cytidine and deoxycytidylate deaminase family. In terms of assembly, homodimer. Zn(2+) serves as cofactor.

The catalysed reaction is cytidine + H2O + H(+) = uridine + NH4(+). It catalyses the reaction 2'-deoxycytidine + H2O + H(+) = 2'-deoxyuridine + NH4(+). In terms of biological role, this enzyme scavenges exogenous and endogenous cytidine and 2'-deoxycytidine for UMP synthesis. In Shewanella sp. (strain ANA-3), this protein is Cytidine deaminase.